We begin with the raw amino-acid sequence, 395 residues long: Teichoic acid D-alanyltransferase (395 aa).

The Extracellular segment spans residues 1 to 6; sequence MTPYSS. Residues 7–26 traverse the membrane as a helical segment; sequence FLFFILLGILLLPTIILGLN. The Cytoplasmic segment spans residues 27-30; sequence GKRF. The chain crosses the membrane as a helical span at residues 31-46; it reads QAYNMFISIIILALIF. Residues 47–50 lie on the Extracellular side of the membrane; the sequence is SHDL. The helical transmembrane segment at 51 to 76 threads the bilayer; the sequence is HGVIALCLFTIWQVLLISGYLAYRQK. The Cytoplasmic portion of the chain corresponds to 77–79; sequence ANS. A helical membrane pass occupies residues 80–104; that stretch reads GFVFCGAVIASILPLFLSKIWPFLS. Topologically, residues 105–120 are extracellular; that stretch reads HPQPHHPPHNLISFLG. Residues 121–137 form a helical membrane-spanning segment; the sequence is ISYLTFKGVQLIMEARD. At 138-145 the chain is on the cytoplasmic side; sequence GLLKEQLP. The stretch at 146 to 175 is an intramembrane region; it reads LHRLLYFILFFPTISSGPIDRYRRFVKDEQ. The Cytoplasmic portion of the chain corresponds to 176-179; that stretch reads KAWT. Residues 180-223 traverse the membrane as a helical segment; the sequence is KEEYADLLYTGIHKIFIGFLYKFIIGYAINTYFIMNLPAITHNK. Ile224 is a topological domain (extracellular). The helical transmembrane segment at 225–256 threads the bilayer; that stretch reads LGNLLYMYGYSMYLFFDFAGYTMFAVGVSYIM. The Cytoplasmic portion of the chain corresponds to 257–266; the sequence is GIKSPENFNK. The stretch at 267-303 is an intramembrane region; that stretch reads PFISKNIKDFWNRWHMSLSFWFRDYVFMRFVFWMTKK. Residues 304–308 are Cytoplasmic-facing; sequence KWIKN. A helical membrane pass occupies residues 309–328; sequence RMAVSNIGYFLLFMLMGVWH. His328 is an active-site residue. Residues 329–333 are Extracellular-facing; it reads GLAPQ. The helical transmembrane segment at 334–351 threads the bilayer; sequence YIIYGLYHAVLMTCYNFF. Residues 352–364 lie on the Cytoplasmic side of the membrane; the sequence is EKWNKKYKWLPSN. Residues 365–387 form a helical membrane-spanning segment; it reads RWTTILAIVITFHFVCFGFYIFS. The Extracellular segment spans residues 388 to 395; it reads GKPFHHHH.

The protein belongs to the membrane-bound acyltransferase family.

Its subcellular location is the cell membrane. Its pathway is cell wall biogenesis; lipoteichoic acid biosynthesis. O-acyltransferase that catalyzes D-alanylation of both teichoic acid and lipoteichoic acid (LTA). D-alanylation of LTA plays an important role in modulating the properties of the cell wall in Gram-positive bacteria, influencing the net charge of the cell wall. Catalyzes D-alanylation from DltC carrier protein. In Bacillus subtilis (strain 168), this protein is Teichoic acid D-alanyltransferase.